The sequence spans 147 residues: Allograft inflammatory factor 1 (147 aa).

An N-acetylserine modification is found at Ser2. The residue at position 11 (Lys11) is an N6-acetyllysine. Ser39 bears the Phosphoserine mark. 2 consecutive EF-hand domains span residues 45 to 80 and 81 to 115; these read SKLE…LGVP and KTHL…GKRS. Asp58, Asn60, Asn62, Asp64, Thr100, and Asp105 together coordinate Ca(2+). The disordered stretch occupies residues 128–147; that stretch reads AREKEKPTGPPAKKAISELP.

Homodimer (Potential). Monomer. Interacts with LCP1. In terms of processing, phosphorylated on serine residues.

It localises to the cytoplasm. It is found in the cytoskeleton. The protein resides in the cell projection. The protein localises to the ruffle membrane. Its subcellular location is the phagocytic cup. In terms of biological role, actin-binding protein that enhances membrane ruffling and RAC activation. Enhances the actin-bundling activity of LCP1. Binds calcium. Plays a role in RAC signaling and in phagocytosis. May play a role in macrophage activation and function. Promotes the proliferation of vascular smooth muscle cells and of T-lymphocytes. Enhances lymphocyte migration. Plays a role in vascular inflammation. This Macaca mulatta (Rhesus macaque) protein is Allograft inflammatory factor 1 (AIF1).